A 656-amino-acid chain; its full sequence is Methionine--tRNA ligase (656 aa).

The 'HIGH' region signature appears at Tyr11–His21. The Zn(2+) site is built by Cys126, Cys129, Cys147, and Cys150. The 'KMSKS' region signature appears at Lys301–Ser305. Lys304 provides a ligand contact to ATP. Residues Asp555–Ser656 enclose the tRNA-binding domain.

The protein belongs to the class-I aminoacyl-tRNA synthetase family. MetG type 2A subfamily. Homodimer. Zn(2+) is required as a cofactor.

The protein localises to the cytoplasm. The catalysed reaction is tRNA(Met) + L-methionine + ATP = L-methionyl-tRNA(Met) + AMP + diphosphate. Is required not only for elongation of protein synthesis but also for the initiation of all mRNA translation through initiator tRNA(fMet) aminoacylation. The chain is Methionine--tRNA ligase (metG) from Helicobacter pylori (strain J99 / ATCC 700824) (Campylobacter pylori J99).